Consider the following 609-residue polypeptide: Proteasome-associated ATPase (609 aa).

The segment at 1–24 (MGESERSEAFGIPRDSPLSSGDAA) is disordered. Residues 20 to 96 (SGDAAELEQL…LREEVDRLGQ (77 aa)) adopt a coiled-coil conformation. 296-301 (GCGKTL) is an ATP binding site. The interval 608–609 (YL) is docks into pockets in the proteasome alpha-ring.

This sequence belongs to the AAA ATPase family. In terms of assembly, homohexamer. Assembles into a hexameric ring structure that caps the 20S proteasome core. Strongly interacts with the prokaryotic ubiquitin-like protein Pup through a hydrophobic interface; the interacting region of ARC lies in its N-terminal coiled-coil domain. There is one Pup binding site per ARC hexamer ring. Upon ATP-binding, the C-terminus of ARC interacts with the alpha-rings of the proteasome core, possibly by binding to the intersubunit pockets.

Its pathway is protein degradation; proteasomal Pup-dependent pathway. Functionally, ATPase which is responsible for recognizing, binding, unfolding and translocation of pupylated proteins into the bacterial 20S proteasome core particle. May be essential for opening the gate of the 20S proteasome via an interaction with its C-terminus, thereby allowing substrate entry and access to the site of proteolysis. Thus, the C-termini of the proteasomal ATPase may function like a 'key in a lock' to induce gate opening and therefore regulate proteolysis. In Mycobacterium bovis (strain BCG / Pasteur 1173P2), this protein is Proteasome-associated ATPase.